Here is a 472-residue protein sequence, read N- to C-terminus: 4-aminobutyrate aminotransferase (472 aa).

Pyridoxal 5'-phosphate is bound at residue Gly-135 to Ala-136. Arg-193 serves as a coordination point for substrate. An N6-(pyridoxal phosphate)lysine modification is found at Lys-327. Thr-352 contributes to the pyridoxal 5'-phosphate binding site.

It belongs to the class-III pyridoxal-phosphate-dependent aminotransferase family. In terms of assembly, homodimer and homotetramer. It depends on pyridoxal 5'-phosphate as a cofactor.

Its subcellular location is the cytoplasm. It catalyses the reaction 4-aminobutanoate + 2-oxoglutarate = succinate semialdehyde + L-glutamate. It functions in the pathway amino-acid degradation; L-arginine degradation. In terms of biological role, required for the degradation of gamma-aminobutyric acid (GABA), which is important for utilization of GABA as nitrogen source and for oxidative stress tolerance. Deaminates GABA to succinate semialdehyde, which in turn is converted to succinate by the succinate-semialdehyde dehydrogenase UGA2. May be involved in an alternative, arginase-independent arginine degradation pathway via GABA. This Kluyveromyces lactis (strain ATCC 8585 / CBS 2359 / DSM 70799 / NBRC 1267 / NRRL Y-1140 / WM37) (Yeast) protein is 4-aminobutyrate aminotransferase.